Here is a 351-residue protein sequence, read N- to C-terminus: C-X-C chemokine receptor type 1 (351 aa).

At 1-46 the chain is on the extracellular side; it reads MSNATDPQMGDDDYDLNFTGMPPTDEDYSPCRLETQSLNKYVVIVT. 2 N-linked (GlcNAc...) asparagine glycosylation sites follow: asparagine 3 and asparagine 17. The helical transmembrane segment at 47 to 67 threads the bilayer; sequence YALVFLLSLLGNSLVMLVILY. Over 68–76 the chain is Cytoplasmic; that stretch reads RRVGRSVTD. The chain crosses the membrane as a helical span at residues 77 to 97; sequence VYLLNLAMADLLFALTLPIWA. The Extracellular segment spans residues 98–112; the sequence is ASKVNGWIFGTFLCK. A disulfide bridge connects residues cysteine 111 and cysteine 188. Residues 113 to 133 form a helical membrane-spanning segment; that stretch reads VVSLLKEVNFYSGILLLACIS. Residues 134–154 lie on the Cytoplasmic side of the membrane; sequence VDRYLAIVHATRTLIQKRHSV. A helical membrane pass occupies residues 155–175; it reads KFVCLSCWGLSVILSLPFFLF. The Extracellular portion of the chain corresponds to 176-204; the sequence is RQAYHPNNSTPVCYEVLGNDTAKWRMVLR. Residues asparagine 182 and asparagine 194 are each glycosylated (N-linked (GlcNAc...) asparagine). The helical transmembrane segment at 205 to 225 threads the bilayer; it reads ILPHTFGFTLPLLIMLFCYGF. Over 226-243 the chain is Cytoplasmic; sequence TLHTLFKAHIGQKHRAMR. The helical transmembrane segment at 244–264 threads the bilayer; sequence VIFAVVLIFLLCWLPYNLVLL. Residues 265–289 lie on the Extracellular side of the membrane; that stretch reads ADTLMRTHLIKESCERRNDIGRALD. A helical transmembrane segment spans residues 290–310; sequence ATEILGFLHSCLNPIIYAFIG. Topologically, residues 311-351 are cytoplasmic; that stretch reads QNFRHGFLKILATHGLVSKEFLARHHVTSYTSSSVNVSSNL.

The protein belongs to the G-protein coupled receptor 1 family. In terms of assembly, interacts with IL8. Interacts with GNAI2.

It localises to the cell membrane. Its function is as follows. Receptor to interleukin-8, which is a powerful neutrophils chemotactic factor. Binding of IL-8 to the receptor causes activation of neutrophils. This response is mediated via a G-protein that activates a phosphatidylinositol-calcium second messenger system. The sequence is that of C-X-C chemokine receptor type 1 (CXCR1) from Macaca mulatta (Rhesus macaque).